A 166-amino-acid polypeptide reads, in one-letter code: Ribosome maturation factor RimM (166 aa).

In terms of domain architecture, PRC barrel spans 94-165 (EGEYYLGKLI…TIELKVLDLL (72 aa)).

This sequence belongs to the RimM family. Binds ribosomal protein uS19.

It localises to the cytoplasm. Functionally, an accessory protein needed during the final step in the assembly of 30S ribosomal subunit, possibly for assembly of the head region. Essential for efficient processing of 16S rRNA. May be needed both before and after RbfA during the maturation of 16S rRNA. It has affinity for free ribosomal 30S subunits but not for 70S ribosomes. This Borreliella afzelii (strain PKo) (Borrelia afzelii) protein is Ribosome maturation factor RimM.